Reading from the N-terminus, the 229-residue chain is Potassium/proton antiporter CemA (229 aa).

The next 3 helical transmembrane spans lie at 7–27 (FTPL…SLSF), 107–127 (ILHF…SLLG), and 189–209 (IISG…KYWI).

The protein belongs to the CemA family.

The protein resides in the plastid. It localises to the chloroplast inner membrane. The catalysed reaction is K(+)(in) + H(+)(out) = K(+)(out) + H(+)(in). In terms of biological role, contributes to K(+)/H(+) antiport activity by supporting proton efflux to control proton extrusion and homeostasis in chloroplasts in a light-dependent manner to modulate photosynthesis. Prevents excessive induction of non-photochemical quenching (NPQ) under continuous-light conditions. Indirectly promotes efficient inorganic carbon uptake into chloroplasts. The polypeptide is Potassium/proton antiporter CemA (Lactuca sativa (Garden lettuce)).